Reading from the N-terminus, the 479-residue chain is Integrator complex subunit 12 (479 aa).

Positions 57-140 (SKVSLPKMTK…SPIAFQTKDI (84 aa)) are disordered. Positions 70–90 (KSSSSSSASSSITTTSSSKSS) are enriched in low complexity. The span at 91–128 (TSEKSKKESEKRTLEKIRVDPGEGVEPPKKPRLEKQDS) shows a compositional bias: basic and acidic residues. The PHD-type zinc-finger motif lies at 161–217 (GLACVVCRQMTVTSGNQLVECQECHNLYHQECHKPQVTDKDVNDPRLVWYCARCTRQ). Disordered stretches follow at residues 221-241 (MAQKTQKPPQKPAPALATTVP), 274-293 (TAASGNSSSSSSSSSSLPPG), and 305-479 (SNVG…KLKK). Composition is skewed to low complexity over residues 223–239 (QKTQKPPQKPAPALATT) and 280–289 (SSSSSSSSSS). Residues 305–328 (SNVGPSSTKLSTSQSGNSKTSPAA) are compositionally biased toward polar residues. Residues 354 to 364 (SSAGSGNGNNG) show a composition bias toward gly residues. The segment covering 399–411 (GSLSPGAAPSSSL) has biased composition (low complexity). The segment covering 412–428 (GGNGGSGGNGAGNGGNS) has biased composition (gly residues). Low complexity predominate over residues 429-451 (AGSSSSSGNNNNNGAKASADGKA). Positions 466–479 (QMVKKKAAQKKLKK) are enriched in basic residues.

The protein belongs to the Integrator subunit 12 family. As to quaternary structure, component of the Integrator complex, composed of core subunits INTS1, INTS2, INTS3, INTS4, INTS5, INTS6, INTS7, INTS8, INTS9/RC74, INTS10, INTS11/CPSF3L, INTS12, INTS13, INTS14 and INTS15. The core complex associates with protein phosphatase 2A subunits PPP2CA and PPP2R1A, to form the Integrator-PP2A (INTAC) complex.

It is found in the nucleus. Functionally, component of the integrator complex, a multiprotein complex that terminates RNA polymerase II (Pol II) transcription in the promoter-proximal region of genes. The integrator complex provides a quality checkpoint during transcription elongation by driving premature transcription termination of transcripts that are unfavorably configured for transcriptional elongation: the complex terminates transcription by (1) catalyzing dephosphorylation of the C-terminal domain (CTD) of Pol II subunit POLR2A/RPB1 and SUPT5H/SPT5, (2) degrading the exiting nascent RNA transcript via endonuclease activity and (3) promoting the release of Pol II from bound DNA. The integrator complex is also involved in terminating the synthesis of non-coding Pol II transcripts, such as enhancer RNAs (eRNAs), small nuclear RNAs (snRNAs), telomerase RNAs and long non-coding RNAs (lncRNAs). This Danio rerio (Zebrafish) protein is Integrator complex subunit 12 (ints12).